The primary structure comprises 648 residues: Interferon-induced GTP-binding protein Mx1 (648 aa).

Position 1 is an N-acetylmethionine (Met1). Positions 1–26 (MVHSDLGIEELDSPESSLNGSEDMES) are disordered. Positions 56–329 (DLALPAIAVI…LIMHICKTLP (274 aa)) constitute a Dynamin-type G domain. Positions 66–73 (GDQSSGKS) are G1 motif. A GTP-binding site is contributed by 66-73 (GDQSSGKS). The interval 91–93 (VTR) is G2 motif. Residues 167-170 (DLPG) are G3 motif. GTP-binding positions include 167-171 (DLPGI) and 236-239 (TKPD). The segment at 236–239 (TKPD) is G4 motif. The segment at 268 to 271 (KCRG) is G5 motif. The tract at residues 330 to 355 (LLENQIKETHQRITEELQKYGKDIPE) is bundle signaling element (BSE). The tract at residues 355-522 (EEESEKMFCL…HFQMEQLVYC (168 aa)) is middle domain. The tract at residues 356–618 (EESEKMFCLI…KDQYDWLLKE (263 aa)) is stalk. Residues 543–546 (KNKK) are critical for lipid-binding. The GED domain maps to 560 to 648 (TDEIFQHLTA…ARQRLAKFPG (89 aa)).

The protein belongs to the TRAFAC class dynamin-like GTPase superfamily. Dynamin/Fzo/YdjA family. As to quaternary structure, homooligomer. Oligomerizes into multimeric filamentous or ring-like structures by virtue of its stalk domain. Oligomerization is critical for GTPase activity, protein stability, and recognition of viral target structures. Interacts with TRPC1, TRPC3, TRPC4, TRPC5, TRPC6 and TRPC7. Interacts with HSPA5. Interacts with TUBB/TUBB5. Interacts with DDX39A and DDX39B. In terms of processing, ISGylated. In terms of tissue distribution, ubiquitously expressed.

The protein localises to the cytoplasm. It is found in the endoplasmic reticulum membrane. The protein resides in the perinuclear region. It localises to the nucleus. Its function is as follows. Interferon-induced dynamin-like GTPase with antiviral activity against rabies virus (RABV), vesicular stomatitis virus (VSV) and murine pneumonia virus (MPV). Isoform 1 but not isoform 2 shows antiviral activity against vesicular stomatitis virus (VSV). This Bos taurus (Bovine) protein is Interferon-induced GTP-binding protein Mx1 (MX1).